A 78-amino-acid chain; its full sequence is MNSKIDSAIPFIGSLTALISGYSLHEWASLFGILFGAVSVWIAYRKYKEDVQARKDELAYKMLVAKIEAKKLGIAIDE.

At 1-6 (MNSKID) the chain is on the cytoplasmic side. The chain crosses the membrane as a helical span at residues 7-23 (SAIPFIGSLTALISGYS). The Periplasmic segment spans residues 24 to 29 (LHEWAS). Residues 30 to 46 (LFGILFGAVSVWIAYRK) form a helical membrane-spanning segment. Residues 47 to 78 (YKEDVQARKDELAYKMLVAKIEAKKLGIAIDE) are Cytoplasmic-facing.

Its subcellular location is the host cell inner membrane. Its function is as follows. Accumulates harmlessly in the cytoplasmic membrane until it reaches a critical concentration that triggers the formation of nanometer-scale pores (pinholes) causing host cell membrane depolarization and endolysin refolding and release into the periplasmic space. Once the pinholin has permeabilized the host cell membrane, the SAR-endolysin is released into the periplasm and breaks down the peptidoglycan layer. Determines the precise timing of host cell lysis. Participates with the SAR-endolysin and the U-spanin protein in the sequential events which lead to the programmed host cell lysis releasing the mature viral particles from the host cell. This chain is Holin (hol), found in Haemophilus influenzae (Bacteriophage HP1).